The primary structure comprises 75 residues: Small ribosomal subunit protein bS18 (75 aa).

It belongs to the bacterial ribosomal protein bS18 family. Part of the 30S ribosomal subunit. Forms a tight heterodimer with protein bS6.

Functionally, binds as a heterodimer with protein bS6 to the central domain of the 16S rRNA, where it helps stabilize the platform of the 30S subunit. The sequence is that of Small ribosomal subunit protein bS18 from Desulforudis audaxviator (strain MP104C).